A 264-amino-acid polypeptide reads, in one-letter code: Thymidylate synthase (264 aa).

Arginine 21 contributes to the dUMP binding site. Histidine 51 lines the (6R)-5,10-methylene-5,6,7,8-tetrahydrofolate pocket. Residue 126 to 127 coordinates dUMP; the sequence is RR. Cysteine 146 serves as the catalytic Nucleophile. DUMP contacts are provided by residues 166 to 169, asparagine 177, and 207 to 209; these read RSCD and HLY. Aspartate 169 contributes to the (6R)-5,10-methylene-5,6,7,8-tetrahydrofolate binding site. Alanine 263 provides a ligand contact to (6R)-5,10-methylene-5,6,7,8-tetrahydrofolate.

It belongs to the thymidylate synthase family. Bacterial-type ThyA subfamily. In terms of assembly, homodimer.

Its subcellular location is the cytoplasm. It carries out the reaction dUMP + (6R)-5,10-methylene-5,6,7,8-tetrahydrofolate = 7,8-dihydrofolate + dTMP. Its pathway is pyrimidine metabolism; dTTP biosynthesis. In terms of biological role, catalyzes the reductive methylation of 2'-deoxyuridine-5'-monophosphate (dUMP) to 2'-deoxythymidine-5'-monophosphate (dTMP) while utilizing 5,10-methylenetetrahydrofolate (mTHF) as the methyl donor and reductant in the reaction, yielding dihydrofolate (DHF) as a by-product. This enzymatic reaction provides an intracellular de novo source of dTMP, an essential precursor for DNA biosynthesis. The chain is Thymidylate synthase from Shigella boydii serotype 4 (strain Sb227).